The chain runs to 272 residues: Tryptophan synthase alpha chain (272 aa).

Catalysis depends on proton acceptor residues glutamate 49 and aspartate 60.

It belongs to the TrpA family. In terms of assembly, tetramer of two alpha and two beta chains.

It catalyses the reaction (1S,2R)-1-C-(indol-3-yl)glycerol 3-phosphate + L-serine = D-glyceraldehyde 3-phosphate + L-tryptophan + H2O. It functions in the pathway amino-acid biosynthesis; L-tryptophan biosynthesis; L-tryptophan from chorismate: step 5/5. Its function is as follows. The alpha subunit is responsible for the aldol cleavage of indoleglycerol phosphate to indole and glyceraldehyde 3-phosphate. The polypeptide is Tryptophan synthase alpha chain (Methylibium petroleiphilum (strain ATCC BAA-1232 / LMG 22953 / PM1)).